Consider the following 89-residue polypeptide: Small ribosomal subunit protein uS15 (89 aa).

It belongs to the universal ribosomal protein uS15 family. Part of the 30S ribosomal subunit. Forms a bridge to the 50S subunit in the 70S ribosome, contacting the 23S rRNA.

One of the primary rRNA binding proteins, it binds directly to 16S rRNA where it helps nucleate assembly of the platform of the 30S subunit by binding and bridging several RNA helices of the 16S rRNA. Its function is as follows. Forms an intersubunit bridge (bridge B4) with the 23S rRNA of the 50S subunit in the ribosome. The protein is Small ribosomal subunit protein uS15 of Chlorobium limicola (strain DSM 245 / NBRC 103803 / 6330).